The following is a 450-amino-acid chain: Phosphoglucosamine mutase (450 aa).

Catalysis depends on S101, which acts as the Phosphoserine intermediate. Mg(2+) contacts are provided by S101, D240, D242, and D244. Phosphoserine is present on S101.

This sequence belongs to the phosphohexose mutase family. Requires Mg(2+) as cofactor. Activated by phosphorylation.

It carries out the reaction alpha-D-glucosamine 1-phosphate = D-glucosamine 6-phosphate. Catalyzes the conversion of glucosamine-6-phosphate to glucosamine-1-phosphate. The chain is Phosphoglucosamine mutase from Streptococcus equi subsp. equi (strain 4047).